Here is a 911-residue protein sequence, read N- to C-terminus: SH3 and PX domain-containing protein 2B (911 aa).

One can recognise a PX domain in the interval 5-129; it reads RSIVEVKVLD…QFFETRPEDL (125 aa). Residue Y25 is modified to Phosphotyrosine. SH3 domains lie at 152–211 and 221–280; these read MVLE…GQDG and EEEE…KNSG. Positions 275–366 are disordered; that stretch reads LKKNSGEPLP…GLNLPKPPIP (92 aa). A phosphoserine mark is found at S279 and S291. The segment covering 282-292 has biased composition (pro residues); it reads PLPPKPGPGSP. Residues 311 to 337 show a composition bias toward basic and acidic residues; the sequence is GREKELLSSQRDGRFEGRPVPDGDAKQ. Basic residues predominate over residues 338–347; it reads RSPKMRQRPP. An SH3 3 domain is found at 368-427; the sequence is QVEEEYYTIAEFQTTIPDGISFQAGLKVEVIEKNLSGWWYIQIEDKEGWAPATFIDKYKK. A disordered region spans residues 458–834; it reads NTGSEATGPS…GPWGTGKIGE (377 aa). Basic and acidic residues-rich tracts occupy residues 486–499, 517–548, 571–586, 598–609, and 618–628; these read KDWK…RKAS, EEKP…RTEQ, PARD…DKSR, CGHKVLAKEVKK, and SKTDLPEEKPD. 2 positions are modified to phosphoserine: S499 and S528. Pro residues-rich tracts occupy residues 643 to 653 and 756 to 766; these read RPKPAPSPKTE and VVPPRRPPPPK. Over residues 822 to 831 the composition is skewed to gly residues; sequence GSLGPWGTGK. S843 carries the post-translational modification Phosphoserine. The SH3 4 domain occupies 850 to 911; the sequence is LKDSLYVAVA…IPSNYLRKKP (62 aa).

Belongs to the SH3PXD2 family. Interacts with ADAM15. Interacts with NOXO1. Interacts (via SH3 domains) with NOXA1; the interaction is direct. Interacts with FASLG. Post-translationally, phosphorylated in SRC-transformed cells. As to expression, expressed in fibroblasts.

Its subcellular location is the cytoplasm. The protein localises to the cell projection. It localises to the podosome. Adapter protein involved in invadopodia and podosome formation and extracellular matrix degradation. Binds matrix metalloproteinases (ADAMs), NADPH oxidases (NOXs) and phosphoinositides. Acts as an organizer protein that allows NOX1- or NOX3-dependent reactive oxygen species (ROS) generation and ROS localization. Plays a role in mitotic clonal expansion during the immediate early stage of adipocyte differentiation. The sequence is that of SH3 and PX domain-containing protein 2B (SH3PXD2B) from Homo sapiens (Human).